The chain runs to 123 residues: Large ribosomal subunit protein bL12 (123 aa).

It belongs to the bacterial ribosomal protein bL12 family. As to quaternary structure, homodimer. Part of the ribosomal stalk of the 50S ribosomal subunit. Forms a multimeric L10(L12)X complex, where L10 forms an elongated spine to which 2 to 4 L12 dimers bind in a sequential fashion. Binds GTP-bound translation factors.

Its function is as follows. Forms part of the ribosomal stalk which helps the ribosome interact with GTP-bound translation factors. Is thus essential for accurate translation. This is Large ribosomal subunit protein bL12 from Metamycoplasma arthritidis (strain 158L3-1) (Mycoplasma arthritidis).